The primary structure comprises 404 residues: Neutral protease 2 homolog AFLA_065450 (404 aa).

An N-terminal signal peptide occupies residues 1–19; it reads MRFISASSLLLALAPTLNA. Residues 20–185 constitute a propeptide that is removed on maturation; the sequence is VPVEVAGSAQ…TQAVKILERR (166 aa). Intrachain disulfides connect C191-C263 and C270-C288. H313 is a binding site for Zn(2+). The active site involves E314. Residues H317 and D328 each contribute to the Zn(2+) site.

Belongs to the peptidase M35 family. Zn(2+) is required as a cofactor.

It localises to the secreted. The catalysed reaction is Preferential cleavage of bonds with hydrophobic residues in P1'. Also 3-Asn-|-Gln-4 and 8-Gly-|-Ser-9 bonds in insulin B chain.. Its function is as follows. Secreted metalloproteinase that allows assimilation of proteinaceous substrates. Shows high activities on basic nuclear substrates such as histone and protamine. The protein is Neutral protease 2 homolog AFLA_065450 of Aspergillus flavus (strain ATCC 200026 / FGSC A1120 / IAM 13836 / NRRL 3357 / JCM 12722 / SRRC 167).